We begin with the raw amino-acid sequence, 48 residues long: DNA-directed RNA polymerase subunit Rpo12 (48 aa).

C9, C26, and C29 together coordinate Zn(2+).

The protein belongs to the archaeal Rpo12/eukaryotic RPC10 RNA polymerase subunit family. As to quaternary structure, part of the RNA polymerase complex. Zn(2+) serves as cofactor.

The protein resides in the cytoplasm. It catalyses the reaction RNA(n) + a ribonucleoside 5'-triphosphate = RNA(n+1) + diphosphate. DNA-dependent RNA polymerase (RNAP) catalyzes the transcription of DNA into RNA using the four ribonucleoside triphosphates as substrates. The sequence is that of DNA-directed RNA polymerase subunit Rpo12 from Sulfurisphaera tokodaii (strain DSM 16993 / JCM 10545 / NBRC 100140 / 7) (Sulfolobus tokodaii).